Here is a 453-residue protein sequence, read N- to C-terminus: Aminodeoxychorismate synthase component 1 (453 aa).

L-tryptophan is bound by residues Ser-36, 43–46 (YSRF), and 240–242 (PFS). Catalysis depends on Glu-258, which acts as the Proton donor. The active-site N6-(4-deoxychorismate)-lysine intermediate is Lys-274.

This sequence belongs to the anthranilate synthase component I family. Monomer. Heterodimer consisting of two non-identical subunits: a glutamine amidotransferase subunit (PabA) and a aminodeoxychorismate synthase subunit (PabB). Mg(2+) is required as a cofactor.

It carries out the reaction chorismate + L-glutamine = 4-amino-4-deoxychorismate + L-glutamate. The protein operates within cofactor biosynthesis; tetrahydrofolate biosynthesis; 4-aminobenzoate from chorismate: step 1/2. Inhibited by 6-diazo-5-oxo-L-norleucine (DON). The inhibition is competitive with glutamine but uncompetitive with chorismate. Also inhibited by 2-fluorochorismate. In terms of biological role, part of a heterodimeric complex that catalyzes the two-step biosynthesis of 4-amino-4-deoxychorismate (ADC), a precursor of p-aminobenzoate (PABA) and tetrahydrofolate. In the first step, a glutamine amidotransferase (PabA) generates ammonia as a substrate that, along with chorismate, is used in the second step, catalyzed by aminodeoxychorismate synthase (PabB) to produce ADC. PabB, in the absence of PabA, can catalyze the formation of ADC in the presence of exogenous ammonia. This Escherichia coli (strain K12) protein is Aminodeoxychorismate synthase component 1 (pabB).